A 402-amino-acid polypeptide reads, in one-letter code: S-adenosylmethionine synthase (402 aa).

Position 15 (histidine 15) interacts with ATP. Aspartate 17 provides a ligand contact to Mg(2+). Glutamate 43 is a K(+) binding site. L-methionine contacts are provided by glutamate 56 and glutamine 99. Positions 99–109 (QSPDIAQGVDT) are flexible loop. ATP is bound by residues 174–176 (DGK), 247–248 (RF), aspartate 256, 262–263 (RK), alanine 279, and lysine 283. Aspartate 256 is an L-methionine binding site. Residue lysine 287 coordinates L-methionine.

Belongs to the AdoMet synthase family. Homotetramer; dimer of dimers. The cofactor is Mg(2+). Requires K(+) as cofactor.

The protein resides in the cytoplasm. It carries out the reaction L-methionine + ATP + H2O = S-adenosyl-L-methionine + phosphate + diphosphate. The protein operates within amino-acid biosynthesis; S-adenosyl-L-methionine biosynthesis; S-adenosyl-L-methionine from L-methionine: step 1/1. In terms of biological role, catalyzes the formation of S-adenosylmethionine (AdoMet) from methionine and ATP. The overall synthetic reaction is composed of two sequential steps, AdoMet formation and the subsequent tripolyphosphate hydrolysis which occurs prior to release of AdoMet from the enzyme. This Streptomyces avermitilis (strain ATCC 31267 / DSM 46492 / JCM 5070 / NBRC 14893 / NCIMB 12804 / NRRL 8165 / MA-4680) protein is S-adenosylmethionine synthase.